Here is a 501-residue protein sequence, read N- to C-terminus: Dipeptide and tripeptide permease A (501 aa).

The Cytoplasmic portion of the chain corresponds to 1–21; it reads MSTANNKPAESVSLNAFKQPR. Residues 22 to 44 traverse the membrane as a helical segment; that stretch reads AFYLIFSIELWERFGYYGLQGIM. The Periplasmic portion of the chain corresponds to 45–59; sequence AVYLVKQLGMSEADS. A helical transmembrane segment spans residues 60–80; the sequence is ITLFSSFSALVYGLVAIGGWL. Topologically, residues 81-89 are cytoplasmic; the sequence is GDKVLGTKR. A helical transmembrane segment spans residues 90 to 110; it reads VIMLGAIVLAIGYALVAWSGH. Residue D111 is a topological domain, periplasmic. The chain crosses the membrane as a helical span at residues 112-132; sequence AAIVYMGMATIAVGNGLFKAN. At 133-153 the chain is on the cytoplasmic side; sequence PSSLLSTCYDKNDPRLDGAFT. Residues 154–174 traverse the membrane as a helical segment; the sequence is MYYMSINIGSFFSMLATPWLA. Residues 175 to 178 are Periplasmic-facing; the sequence is ARFG. Residues 179–199 traverse the membrane as a helical segment; it reads WSVAFALSVVGMVITIINFAF. Residues 200 to 218 lie on the Cytoplasmic side of the membrane; sequence CQKWVKQYGSKPDFAPVHM. The chain crosses the membrane as a helical span at residues 219 to 239; it reads GKLLATIAGVVVLVAIATWLL. Over 240–246 the chain is Periplasmic; the sequence is HNQGIAR. A helical membrane pass occupies residues 247 to 267; sequence MVLGVVALGIVVIFAKETIGL. The Cytoplasmic segment spans residues 268–274; that stretch reads KGAARRK. Residues 275–295 form a helical membrane-spanning segment; it reads MIVAFLLMVEAIVFFVLYSQM. At 296–320 the chain is on the periplasmic side; it reads PTSLNFFAIRNVEHSILGIAFEPEQ. The helical transmembrane segment at 321-341 threads the bilayer; it reads YQALNPFWIMIGSPILAAIYN. Residues 342-352 are Cytoplasmic-facing; sequence KMGDRLPMPHK. A helical membrane pass occupies residues 353 to 373; that stretch reads FAIGMVLCSGAFLVLPLGAKF. The Periplasmic segment spans residues 374–383; sequence ASDAGIVSVN. The chain crosses the membrane as a helical span at residues 384–404; that stretch reads WLILSYALQSIGELMISGLGL. Over 405–414 the chain is Cytoplasmic; sequence AMVAQLVPQR. Residues 415 to 435 traverse the membrane as a helical segment; it reads LMGFIMGSWFLTTAGAAIIAG. Topologically, residues 436-459 are periplasmic; that stretch reads KIANLMAVPENVTDPLVSLEVYGH. The chain crosses the membrane as a helical span at residues 460–480; that stretch reads VFLQIGIVTAVIAALMLLTAP. Over 481–501 the chain is Cytoplasmic; that stretch reads KLNRMTQDDSADLKARETAAA.

It belongs to the major facilitator superfamily. Proton-dependent oligopeptide transporter (POT/PTR) (TC 2.A.17) family. DtpA subfamily.

The protein localises to the cell inner membrane. Proton-dependent permease that transports di- and tripeptides. The protein is Dipeptide and tripeptide permease A of Klebsiella pneumoniae (strain 342).